A 286-amino-acid polypeptide reads, in one-letter code: Master replication protein (286 aa).

In terms of domain architecture, CRESS-DNA virus Rep endonuclease spans Ala2–Phe96. Positions Met9–Ile12 match the RCR-1 motif. Positions 33 and 41 each coordinate a divalent metal cation. Residues His41–Gln43 carry the RCR-2 motif. The Nuclear localization signal motif lies at Arg50–Lys70. Tyr79 serves as the catalytic For DNA cleavage activity. The RCR-3 signature appears at Tyr79–Lys82. Asp84 is an a divalent metal cation binding site. A Nuclear localization signal motif is present at residues Phe96–Asp102. Residue Gly180–Thr188 coordinates ATP.

It belongs to the nanoviridea/circoviridae replication-associated protein family. As to quaternary structure, homooligomer (Potential). Rep binds to repeated DNA motifs (iterons). Requires Mg(2+) as cofactor. It depends on Mn(2+) as a cofactor.

The protein resides in the host nucleus. The catalysed reaction is ATP + H2O = ADP + phosphate + H(+). Its function is as follows. Essential for the replication of all genomic viral ssDNA (trans-replication). The closed circular ssDNA genome is first converted to a superhelical dsDNA. Rep binds a specific hairpin at the genome origin of replication. Introduces an endonucleolytic nick within the conserved sequence 5'-A[GT]TATTAC-3' in the intergenic region of the genome, thereby initiating the rolling circle replication (RCR). Following cleavage, binds covalently to the 5'-phosphate of DNA as a tyrosyl ester. The cleavage gives rise to a free 3'-OH that serves as a primer for the cellular DNA polymerase. The polymerase synthesizes the (+) strand DNA by rolling circle mechanism. After one round of replication, a Rep-catalyzed nucleotidyl transfer reaction releases a circular single-stranded virus genome, thereby terminating the replication. Displays origin-specific DNA cleavage, nucleotidyl transferase, ATPase and helicase activities. The chain is Master replication protein (DNA-R) from Musa (BBTV).